The following is a 382-amino-acid chain: F-box/kelch-repeat protein At3g16580 (382 aa).

In terms of domain architecture, F-box spans Trp-9–His-55. Kelch repeat units follow at residues Lys-150 to Thr-196 and Trp-334 to Gln-381.

In Arabidopsis thaliana (Mouse-ear cress), this protein is F-box/kelch-repeat protein At3g16580.